Consider the following 64-residue polypeptide: Conotoxin Cal6.26 (64 aa).

Positions 1-22 are cleaved as a signal peptide; sequence MKLTCVMIVAVLVLTVCKVVTS. Intrachain disulfides connect C32/C50, C40/C54, and C49/C60.

As to expression, expressed by the venom duct.

Its subcellular location is the secreted. Its function is as follows. Probable neurotoxin. The polypeptide is Conotoxin Cal6.26 (Californiconus californicus (California cone)).